The sequence spans 263 residues: Stress-response A/B barrel domain-containing protein UP3 (263 aa).

Stress-response A/B barrel domains are found at residues 49-142 (IEHI…AVDW) and 158-252 (VAKL…VVEF). The short motif at 261–263 (SSL) is the Peroxisomal targeting signal element.

In terms of assembly, homodimer.

It localises to the peroxisome. Its function is as follows. Involved in stress response. The chain is Stress-response A/B barrel domain-containing protein UP3 from Arabidopsis thaliana (Mouse-ear cress).